The chain runs to 86 residues: Small ribosomal subunit protein uS17 (86 aa).

Belongs to the universal ribosomal protein uS17 family. As to quaternary structure, part of the 30S ribosomal subunit.

Its function is as follows. One of the primary rRNA binding proteins, it binds specifically to the 5'-end of 16S ribosomal RNA. The protein is Small ribosomal subunit protein uS17 of Halorhodospira halophila (strain DSM 244 / SL1) (Ectothiorhodospira halophila (strain DSM 244 / SL1)).